Reading from the N-terminus, the 271-residue chain is Urease accessory protein UreD (271 aa).

Belongs to the UreD family. UreD, UreF and UreG form a complex that acts as a GTP-hydrolysis-dependent molecular chaperone, activating the urease apoprotein by helping to assemble the nickel containing metallocenter of UreC. The UreE protein probably delivers the nickel.

The protein resides in the cytoplasm. Functionally, required for maturation of urease via the functional incorporation of the urease nickel metallocenter. The sequence is that of Urease accessory protein UreD from Mycolicibacterium smegmatis (strain ATCC 700084 / mc(2)155) (Mycobacterium smegmatis).